A 485-amino-acid chain; its full sequence is Glutamyl-tRNA(Gln) amidotransferase subunit A (485 aa).

Catalysis depends on charge relay system residues Lys78 and Ser153. Catalysis depends on Ser177, which acts as the Acyl-ester intermediate.

It belongs to the amidase family. GatA subfamily. Heterotrimer of A, B and C subunits.

It catalyses the reaction L-glutamyl-tRNA(Gln) + L-glutamine + ATP + H2O = L-glutaminyl-tRNA(Gln) + L-glutamate + ADP + phosphate + H(+). Allows the formation of correctly charged Gln-tRNA(Gln) through the transamidation of misacylated Glu-tRNA(Gln) in organisms which lack glutaminyl-tRNA synthetase. The reaction takes place in the presence of glutamine and ATP through an activated gamma-phospho-Glu-tRNA(Gln). The sequence is that of Glutamyl-tRNA(Gln) amidotransferase subunit A from Bacillus cereus (strain ZK / E33L).